Reading from the N-terminus, the 242-residue chain is Polycomb group RING finger protein 3 (242 aa).

An RING-type zinc finger spans residues 17–56 (CRLCSGYLIDATTVTECLHTFCRSCLVKYLEENNTCPTCR). Positions 115–149 (AKQHLDPHRNGETKADDSSNKEAAEEKQEEDGDYH) are disordered. Basic and acidic residues predominate over residues 117–140 (QHLDPHRNGETKADDSSNKEAAEE). The tract at residues 132 to 242 (SSNKEAAEEK…LHYRPKMDLL (111 aa)) is interaction with BCORL1.

As to quaternary structure, component of a PRC1-like complex that contains PCGF3, RNF2 and RYBP. Interacts with CBX6, CBX7 and CBX8. Interacts with BCORL1.

Its subcellular location is the nucleus. The protein localises to the nucleoplasm. In terms of biological role, component of a Polycomb group (PcG) multiprotein PRC1-like complex, a complex class required to maintain the transcriptionally repressive state of many genes, including Hox genes, throughout development. PcG PRC1 complex acts via chromatin remodeling and modification of histones; it mediates monoubiquitination of histone H2A 'Lys-119', rendering chromatin heritably changed in its expressibility. Within the PRC1-like complex, regulates RNF2 ubiquitin ligase activity. Plays a redundant role with PCGF5 as part of a PRC1-like complex that mediates monoubiquitination of histone H2A 'Lys-119' on the X chromosome and is required for normal silencing of one copy of the X chromosome in XX females. The chain is Polycomb group RING finger protein 3 (PCGF3) from Bos taurus (Bovine).